Consider the following 187-residue polypeptide: Large ribosomal subunit protein uL22 (187 aa).

This sequence belongs to the universal ribosomal protein uL22 family.

The chain is Large ribosomal subunit protein uL22 (RPL17) from Theileria annulata.